Here is a 396-residue protein sequence, read N- to C-terminus: 1-deoxy-D-xylulose 5-phosphate reductoisomerase (396 aa).

The NADPH site is built by Thr-10, Gly-11, Ser-12, Ile-13, Asn-38, and Asn-123. Residue Lys-124 participates in 1-deoxy-D-xylulose 5-phosphate binding. Glu-125 provides a ligand contact to NADPH. Asp-149 lines the Mn(2+) pocket. Residues Ser-150, Glu-151, Ser-185, and His-208 each coordinate 1-deoxy-D-xylulose 5-phosphate. Glu-151 is a Mn(2+) binding site. Gly-214 is a binding site for NADPH. 1-deoxy-D-xylulose 5-phosphate contacts are provided by Ser-221, Asn-226, Lys-227, and Glu-230. Position 230 (Glu-230) interacts with Mn(2+).

This sequence belongs to the DXR family. Requires Mg(2+) as cofactor. Mn(2+) serves as cofactor.

The catalysed reaction is 2-C-methyl-D-erythritol 4-phosphate + NADP(+) = 1-deoxy-D-xylulose 5-phosphate + NADPH + H(+). Its pathway is isoprenoid biosynthesis; isopentenyl diphosphate biosynthesis via DXP pathway; isopentenyl diphosphate from 1-deoxy-D-xylulose 5-phosphate: step 1/6. In terms of biological role, catalyzes the NADPH-dependent rearrangement and reduction of 1-deoxy-D-xylulose-5-phosphate (DXP) to 2-C-methyl-D-erythritol 4-phosphate (MEP). The chain is 1-deoxy-D-xylulose 5-phosphate reductoisomerase from Shewanella piezotolerans (strain WP3 / JCM 13877).